Consider the following 490-residue polypeptide: Fumitremorgin C monooxygenase (490 aa).

A helical membrane pass occupies residues 12–32; sequence LGVVGASLIVILGIILLFPLG. Heme is bound at residue C442.

This sequence belongs to the cytochrome P450 family. It depends on heme as a cofactor.

It is found in the membrane. It catalyses the reaction fumitremorgin C + 2 reduced [NADPH--hemoprotein reductase] + 2 O2 = 12alpha,13alpha-dihydroxyfumitremorgin C + 2 oxidized [NADPH--hemoprotein reductase] + 2 H2O + 2 H(+). The protein operates within mycotoxin biosynthesis. Its function is as follows. Cytochrome P450 monooxygenase; part of the gene cluster that mediates the biosynthesis of fumitremorgins, indole alkaloids that carry not only intriguing chemical structures, but also interesting biological and pharmacological activities. The biosynthesis of fumitremorgin-type alkaloids begins by condensation of the two amino acids L-tryptophan and L-proline to brevianamide F, catalyzed by the non-ribosomal peptide synthetase ftmA. Brevianamide F is then prenylated by the prenyltransferase ftmPT1/ftmB in the presence of dimethylallyl diphosphate, resulting in the formation of tryprostatin B. The three cytochrome P450 monooxygenases, ftmP450-1/ftmC, ftmP450-2/ftmE and ftmP450-3/FtmG, are responsible for the conversion of tryprostatin B to 6-hydroxytryprostatin B, tryprostatin A to fumitremorgin C and fumitremorgin C to 12,13-dihydroxyfumitremorgin C, respectively. The putative methyltransferase ftmMT/ftmD is expected for the conversion of 6-hydroxytryprostatin B to tryprostatin A. FtmPT2/FtmH catalyzes the prenylation of 12,13-dihydroxyfumitre-morgin C in the presence of dimethylallyl diphosphate, resulting in the formation of fumitremorgin B. Fumitremorgin B is further converted to verruculogen by ftmOx1/ftmF via the insertion of an endoperoxide bond between the two prenyl moieties. In some fungal species, verruculogen is further converted to fumitremorgin A, but the enzymes involved in this step have not been identified yet. This chain is Fumitremorgin C monooxygenase, found in Aspergillus fumigatus (strain ATCC MYA-4609 / CBS 101355 / FGSC A1100 / Af293) (Neosartorya fumigata).